The chain runs to 276 residues: NADPH-dependent 7-cyano-7-deazaguanine reductase (276 aa).

Residue 83–85 (IES) participates in substrate binding. 85–86 (SK) contributes to the NADPH binding site. Residue cysteine 184 is the Thioimide intermediate of the active site. The active-site Proton donor is the aspartate 191. 223–224 (HE) is a substrate binding site. 252–253 (RG) contributes to the NADPH binding site.

The protein belongs to the GTP cyclohydrolase I family. QueF type 2 subfamily. In terms of assembly, homodimer.

Its subcellular location is the cytoplasm. It carries out the reaction 7-aminomethyl-7-carbaguanine + 2 NADP(+) = 7-cyano-7-deazaguanine + 2 NADPH + 3 H(+). Its pathway is tRNA modification; tRNA-queuosine biosynthesis. Functionally, catalyzes the NADPH-dependent reduction of 7-cyano-7-deazaguanine (preQ0) to 7-aminomethyl-7-deazaguanine (preQ1). The chain is NADPH-dependent 7-cyano-7-deazaguanine reductase from Pseudomonas putida (strain ATCC 47054 / DSM 6125 / CFBP 8728 / NCIMB 11950 / KT2440).